Reading from the N-terminus, the 423-residue chain is Major royal jelly protein 9 (423 aa).

A signal peptide spans 1-20 (MSFNIWWLILYFSIVCQAKA). N-linked (GlcNAc...) asparagine glycans are attached at residues N110, N118, N177, N196, and N345.

Belongs to the major royal jelly protein family. In terms of tissue distribution, expressed at very low levels in the hypopharyngeal glands of adult worker bees (at protein level); expression peaks at 12 days post eclosion. Secreted into bee venom in the sting apparatus (at protein level). Expressed in the brains of adult worker bees peaking at 12 days post eclosion (at protein level). Expressed in the spermatheca of adult queen bees (at protein level); expression levels are higher in mated queens than in virgin queens. Along with Mrjp8 expressed at very low levels in the head of worker bees compared to other major royal jelly proteins.

It localises to the secreted. In terms of biological role, component of bee sting venom. Component of royal jelly, a substance produced in the hypopharyngeal gland containing proteins, free amino acids, fatty acids, sugars and other nutrients, which is fed to developing larvae by worker nurse bees; may be present only at trace levels. All larvae are fed some royal jelly (also known as worker jelly) early in their development but it forms the principal source of nutrition for larvae destined to become queen bees. Produced in the spermatheca of adult queen bees, along with other major royal jelly proteins, where it may act as a nutrient supply for sperm stored by mated queens, or be involved in energy metabolism. In Apis mellifera (Honeybee), this protein is Major royal jelly protein 9.